The sequence spans 320 residues: MIKKIGVLTSGGDSPGMNAAIRGVVRAALSEGLEVFGIYDGYLGLYEDRMEKLDRYSVSDMINRGGTFLGSARFPEFRDDSVRAKAIENLQNRGIDALVVIGGDGSYMGAKRLTEEGFPCIGLPGTIDNDVAGTDYTIGFFTALETVVEAIDRLRDTSSSHQRISIVEVMGRYCGDLTLAAAIAGGCEFIVLPEIEFNREDLVCEIKAGIDKGKKHAIVAITEHICDIDELARHIEQETKRETRATVLGHIQRGGSPVAYDRILASRMGAYAIELLLQGYGGRCVGIQNEKMVHHDIIDAIENMKRPFKGDWLETAKKLY.

Gly-12 is an ATP binding site. Residues 22–26 and 55–60 each bind ADP; these read RGVVR and RYSVSD. Residues 73 to 74 and 103 to 106 contribute to the ATP site; these read RF and GDGS. Asp-104 serves as a coordination point for Mg(2+). Position 126–128 (126–128) interacts with substrate; that stretch reads TID. Asp-128 (proton acceptor) is an active-site residue. Arg-155 is a binding site for ADP. Substrate contacts are provided by residues Arg-163 and 170–172; that span reads MGR. Residues 186–188, Lys-212, and 214–216 contribute to the ADP site; these read GCE and KKH. Substrate contacts are provided by residues Glu-223, Arg-244, and 250 to 253; that span reads HIQR.

This sequence belongs to the phosphofructokinase type A (PFKA) family. ATP-dependent PFK group I subfamily. Prokaryotic clade 'B1' sub-subfamily. Homotetramer. The cofactor is Mg(2+).

It is found in the cytoplasm. The enzyme catalyses beta-D-fructose 6-phosphate + ATP = beta-D-fructose 1,6-bisphosphate + ADP + H(+). It participates in carbohydrate degradation; glycolysis; D-glyceraldehyde 3-phosphate and glycerone phosphate from D-glucose: step 3/4. With respect to regulation, allosterically activated by ADP and other diphosphonucleosides, and allosterically inhibited by phosphoenolpyruvate. In terms of biological role, catalyzes the phosphorylation of D-fructose 6-phosphate to fructose 1,6-bisphosphate by ATP, the first committing step of glycolysis. This Serratia proteamaculans (strain 568) protein is ATP-dependent 6-phosphofructokinase.